A 155-amino-acid chain; its full sequence is 6,7-dimethyl-8-ribityllumazine synthase (155 aa).

Residues Phe24, 58-60 (AFE), and 82-84 (AII) each bind 5-amino-6-(D-ribitylamino)uracil. 87 to 88 (AT) is a binding site for (2S)-2-hydroxy-3-oxobutyl phosphate. His90 acts as the Proton donor in catalysis. Phe115 provides a ligand contact to 5-amino-6-(D-ribitylamino)uracil. Arg129 contributes to the (2S)-2-hydroxy-3-oxobutyl phosphate binding site.

This sequence belongs to the DMRL synthase family.

It catalyses the reaction (2S)-2-hydroxy-3-oxobutyl phosphate + 5-amino-6-(D-ribitylamino)uracil = 6,7-dimethyl-8-(1-D-ribityl)lumazine + phosphate + 2 H2O + H(+). Its pathway is cofactor biosynthesis; riboflavin biosynthesis; riboflavin from 2-hydroxy-3-oxobutyl phosphate and 5-amino-6-(D-ribitylamino)uracil: step 1/2. In terms of biological role, catalyzes the formation of 6,7-dimethyl-8-ribityllumazine by condensation of 5-amino-6-(D-ribitylamino)uracil with 3,4-dihydroxy-2-butanone 4-phosphate. This is the penultimate step in the biosynthesis of riboflavin. This is 6,7-dimethyl-8-ribityllumazine synthase from Prosthecochloris aestuarii (strain DSM 271 / SK 413).